The primary structure comprises 743 residues: Neutral ceramidase (743 aa).

At 1-14 (MASKSRRLSGLEIS) the chain is on the cytoplasmic side. Residues 15–35 (LIVLFLLMTAVSVALITVLAL) form a helical; Signal-anchor for type II membrane protein membrane-spanning segment. At 36 to 743 (KQESDKKEEV…FKVARSFYYF (708 aa)) the chain is on the lumenal side. The disordered stretch occupies residues 40–60 (DKKEEVTPEEPSPSVTPPEKP). The span at 49-59 (EPSPSVTPPEK) shows a compositional bias: pro residues. 2 residues coordinate Zn(2+): His151 and His260. N-linked (GlcNAc...) asparagine glycosylation occurs at Asn265. The active-site Nucleophile is Ser312. 2 disulfides stabilise this stretch: Cys320–Cys334 and Cys327–Cys342. N-linked (GlcNAc...) asparagine glycosylation is found at Asn331, Asn389, Asn398, and Asn451. The cysteines at positions 406 and 456 are disulfide-linked. Residues Glu498 and Tyr538 each contribute to the Zn(2+) site. N-linked (GlcNAc...) asparagine glycosylation occurs at Asn661. Asp672, Ser674, and Thr677 together coordinate Ca(2+). Asn720 carries an N-linked (GlcNAc...) asparagine glycan.

This sequence belongs to the neutral ceramidase family. Requires Zn(2+) as cofactor. In terms of processing, N-glycosylated. O-glycosylated. In terms of tissue distribution, detected in intestine (at protein level).

The protein resides in the cell membrane. It is found in the membrane raft. The protein localises to the membrane. Its subcellular location is the caveola. It localises to the golgi apparatus membrane. The protein resides in the mitochondrion. It is found in the secreted. The protein localises to the extracellular exosome. The enzyme catalyses an N-acylsphing-4-enine + H2O = sphing-4-enine + a fatty acid. It carries out the reaction N-dodecanoylsphing-4-enine + H2O = dodecanoate + sphing-4-enine. Its pathway is lipid metabolism; sphingolipid metabolism. Functionally, plasma membrane ceramidase that hydrolyzes sphingolipid ceramides into sphingosine and free fatty acids at neutral pH. Ceramides, sphingosine, and its phosphorylated form sphingosine-1-phosphate are bioactive lipids that mediate cellular signaling pathways regulating several biological processes including cell proliferation, apoptosis and differentiation. Also catalyzes the reverse reaction allowing the synthesis of ceramides from fatty acids and sphingosine. Together with sphingomyelinase, participates in the production of sphingosine and sphingosine-1-phosphate from the degradation of sphingomyelin, a sphingolipid enriched in the plasma membrane of cells. Also participates in the hydrolysis of ceramides from the extracellular milieu allowing the production of sphingosine-1-phosphate inside and outside cells. The chain is Neutral ceramidase (asah2) from Danio rerio (Zebrafish).